A 506-amino-acid chain; its full sequence is Xaa-Pro aminopeptidase 3 (506 aa).

The transit peptide at 1–31 (MPSLLSTPKLAPVLARLRGLSGCMSCLQRRY) directs the protein to the mitochondrion. An interaction with TNFRSF1B region spans residues 54 to 79 (HPHLLRPGEVTPGLSQVEYALRRHKL). The substrate site is built by tyrosine 300, aspartate 331, aspartate 342, histidine 423, histidine 430, glutamate 450, and glutamate 474. Mn(2+) is bound by residues aspartate 331, aspartate 342, and histidine 423. Glutamate 450 and glutamate 474 together coordinate Mn(2+).

Belongs to the peptidase M24B family. In terms of assembly, homodimer. Interacts with TNFRSF1B/TNFR2 (activated) and TRAF2. Requires Mn(2+) as cofactor. Expressed in brain, kidney, heart, liver, skeletal muscle and testis.

It localises to the mitochondrion. Its subcellular location is the cytoplasm. It catalyses the reaction Release of any N-terminal amino acid, including proline, that is linked to proline, even from a dipeptide or tripeptide.. In terms of biological role, catalyzes the removal of a penultimate prolyl residue from the N-termini of peptides, such as Leu-Pro-Ala. Also shows low activity towards peptides with Ala or Ser at the P1 position. Promotes TNFRSF1B-mediated phosphorylation of MAPK8/JNK1 and MAPK9/JNK2, suggesting a function as an adapter protein for TNFRSF1B; the effect is independent of XPNPEP3 peptidase activity. May inhibit apoptotic cell death induced via TNF-TNFRSF1B signaling. In Mus musculus (Mouse), this protein is Xaa-Pro aminopeptidase 3 (Xpnpep3).